The chain runs to 238 residues: Uridylate kinase (238 aa).

12–15 (KLSG) is an ATP binding site. Gly-54 contacts UMP. ATP is bound by residues Gly-55 and Arg-59. Residues Asp-74 and 135 to 142 (TGNPYFTT) contribute to the UMP site. ATP is bound by residues Thr-162, Asn-163, Tyr-168, and Asp-171.

This sequence belongs to the UMP kinase family. Homohexamer.

It is found in the cytoplasm. The enzyme catalyses UMP + ATP = UDP + ADP. It participates in pyrimidine metabolism; CTP biosynthesis via de novo pathway; UDP from UMP (UMPK route): step 1/1. Inhibited by UTP. Its function is as follows. Catalyzes the reversible phosphorylation of UMP to UDP. The chain is Uridylate kinase from Rhodopseudomonas palustris (strain ATCC BAA-98 / CGA009).